We begin with the raw amino-acid sequence, 203 residues long: Ribosome biogenesis protein RLP24 (203 aa).

The segment at Arg147–Asn203 is disordered. The span at Met155–Ala184 shows a compositional bias: acidic residues. The segment covering Val191–Asn203 has biased composition (basic residues).

The protein belongs to the eukaryotic ribosomal protein eL24 family. In terms of assembly, associated with nucleolar and cytoplasmic pre-60S particles. At the end of biogenesis it dissociates from cytoplasmic pre-60S particles and is likely to be exchanged for its ribosomal homolog, RPL24.

Its subcellular location is the cytoplasm. It localises to the nucleus. Its function is as follows. Involved in the biogenesis of the 60S ribosomal subunit. Ensures the docking of DEHA2D15950g/NOG1 to pre-60S particles. Activates and recruits ATPase AFG2 to cytoplasmic pre-60S ribosomal particles. In Debaryomyces hansenii (strain ATCC 36239 / CBS 767 / BCRC 21394 / JCM 1990 / NBRC 0083 / IGC 2968) (Yeast), this protein is Ribosome biogenesis protein RLP24 (RLP24).